The chain runs to 37 residues: Cytochrome b6-f complex subunit 5 (37 aa).

Residues 5 to 25 form a helical membrane-spanning segment; it reads LLSGIVLGLVPVTIAGLFVTA.

This sequence belongs to the PetG family. In terms of assembly, the 4 large subunits of the cytochrome b6-f complex are cytochrome b6, subunit IV (17 kDa polypeptide, PetD), cytochrome f and the Rieske protein, while the 4 small subunits are PetG, PetL, PetM and PetN. The complex functions as a dimer.

It localises to the plastid. It is found in the chloroplast thylakoid membrane. Component of the cytochrome b6-f complex, which mediates electron transfer between photosystem II (PSII) and photosystem I (PSI), cyclic electron flow around PSI, and state transitions. PetG is required for either the stability or assembly of the cytochrome b6-f complex. The polypeptide is Cytochrome b6-f complex subunit 5 (Stigeoclonium helveticum (Green alga)).